We begin with the raw amino-acid sequence, 1117 residues long: DNA polymerase II large subunit (1117 aa).

Residues 279-294 (STKEEEKKKEESSENK) are compositionally biased toward basic and acidic residues. The segment at 279 to 299 (STKEEEKKKEESSENKPKKKA) is disordered.

The protein belongs to the archaeal DNA polymerase II family. As to quaternary structure, heterodimer of a large subunit and a small subunit.

The enzyme catalyses DNA(n) + a 2'-deoxyribonucleoside 5'-triphosphate = DNA(n+1) + diphosphate. The catalysed reaction is Exonucleolytic cleavage in the 3'- to 5'-direction to yield nucleoside 5'-phosphates.. Functionally, possesses two activities: a DNA synthesis (polymerase) and an exonucleolytic activity that degrades single-stranded DNA in the 3'- to 5'-direction. Has a template-primer preference which is characteristic of a replicative DNA polymerase. The polypeptide is DNA polymerase II large subunit (Methanosphaera stadtmanae (strain ATCC 43021 / DSM 3091 / JCM 11832 / MCB-3)).